Here is a 615-residue protein sequence, read N- to C-terminus: DNA mismatch repair protein MutL (615 aa).

The tract at residues 363-397 is disordered; the sequence is FAEPAAREPVAPRYTPAPASGSRPAAPWPNAQPGY. The segment covering 364-391 has biased composition (low complexity); sequence AEPAAREPVAPRYTPAPASGSRPAAPWP.

The protein belongs to the DNA mismatch repair MutL/HexB family.

This protein is involved in the repair of mismatches in DNA. It is required for dam-dependent methyl-directed DNA mismatch repair. May act as a 'molecular matchmaker', a protein that promotes the formation of a stable complex between two or more DNA-binding proteins in an ATP-dependent manner without itself being part of a final effector complex. The sequence is that of DNA mismatch repair protein MutL from Shigella boydii serotype 18 (strain CDC 3083-94 / BS512).